Consider the following 310-residue polypeptide: Homeobox protein Hox-A13a (310 aa).

The homeobox DNA-binding region spans 244 to 303; the sequence is GRKKRVPYTKVQLKELEREYATNKFITKDKRRRISAQTNLSERQVTIWFQNRRVKEKKVV.

Belongs to the Abd-B homeobox family.

The protein resides in the nucleus. Functionally, sequence-specific transcription factor which is part of a developmental regulatory system that provides cells with specific positional identities on the anterior-posterior axis. In Danio rerio (Zebrafish), this protein is Homeobox protein Hox-A13a (hoxa13a).